The following is a 192-amino-acid chain: Interleukin-18 (192 aa).

Positions 1–35 (MAAIPVDDCINFVGMKFIDNTLYFVADSDENLETD) are excised as a propeptide.

It belongs to the IL-1 family. Forms a ternary complex with ligand-binding receptor subunit IL18R1 and signaling receptor subunit IL18RAP at the plasma membrane. Mature IL18 first binds to IL18R1 forming a low affinity binary complex, which then interacts with IL18RAP to form a high affinity ternary complex that signals inside the cell. Interacts with cargo receptor TMED10; the interaction mediates the translocation from the cytoplasm into the ERGIC (endoplasmic reticulum-Golgi intermediate compartment) and thereby secretion. Post-translationally, the pro-IL-18 precursor is processed by CASP1, CASP4 or CASP5 to yield its mature, active form. The pro-IL-18 precursor features autoinhibitory interactions between the propeptide and the post-cleavage-site region, preventing recognition by the IL18R1 receptor. Processing by CASP1, CASP4 or CASP5 induces conformational changes to generate critical receptor-binding sites. The mature form is then secreted and released in the extracellular milieu by passing through the gasdermin-D (GSDMD) pore. In contrast, cleavage by CASP3 inactivates IL18.

It localises to the cytoplasm. The protein resides in the cytosol. Its subcellular location is the secreted. Functionally, pro-inflammatory cytokine primarily involved in epithelial barrier repair, polarized T-helper 1 (Th1) cell and natural killer (NK) cell immune responses. Upon binding to IL18R1 and IL18RAP, forms a signaling ternary complex which activates NF-kappa-B, triggering synthesis of inflammatory mediators. Synergizes with IL12/interleukin-12 to induce IFNG synthesis from T-helper 1 (Th1) cells and natural killer (NK) cells. Involved in transduction of inflammation downstream of pyroptosis: its mature form is specifically released in the extracellular milieu by passing through the gasdermin-D (GSDMD) pore. The chain is Interleukin-18 (IL18) from Felis catus (Cat).